The following is a 697-amino-acid chain: SITS-binding protein (697 aa).

Residues 1–20 (MARRAKKMASNSGDSSPEPG) form a disordered region. The Cytoplasmic segment spans residues 2-29 (ARRAKKMASNSGDSSPEPGIKEINETWK). A helical transmembrane segment spans residues 30–50 (GAIACLGVALLFLMTIGVLYW). N-linked (GlcNAc...) asparagine glycosylation is found at N112, N134, N162, N386, N405, and N470. The next 2 membrane-spanning stretches (helical) occupy residues 503 to 521 (GLIPSILHYSLLGYSFFIP) and 542 to 562 (WMQIATFLPVMSFSTPPWVFG). N568 is a glycosylation site (N-linked (GlcNAc...) asparagine).

The protein belongs to the glycosyl hydrolase 31 family. Homodimer; disulfide-linked. In terms of tissue distribution, electroplax tissue, brain (200-fold less), and heart (500-fold less).

It localises to the membrane. Its function is as follows. This glycoprotein is probably not a functional part of the chloride channel. This chain is SITS-binding protein, found in Tetronarce californica (Pacific electric ray).